Here is a 109-residue protein sequence, read N- to C-terminus: Parvalbumin alpha (109 aa).

Residue serine 1 is modified to N-acetylserine. EF-hand domains lie at 38–73 (KSDA…FSDG) and 77–109 (LNDK…AKMT). Aspartate 51, aspartate 53, serine 55, tyrosine 57, glutamate 59, glutamate 62, aspartate 90, aspartate 92, aspartate 94, lysine 96, and glutamate 101 together coordinate Ca(2+).

The protein belongs to the parvalbumin family. Monomer.

Functionally, in muscle, parvalbumin is thought to be involved in relaxation after contraction. It binds two calcium ions. This Raja clavata (Thornback ray) protein is Parvalbumin alpha.